The sequence spans 336 residues: Transmembrane protease serine 12 (336 aa).

Positions 1 to 18 (MASWALSAALLCLGGAFA) are cleaved as a signal peptide. The Extracellular portion of the chain corresponds to 19–312 (YSELHSLSLR…HYLSQGNINR (294 aa)). The region spanning 66 to 306 (IIGGSQADTG…FQEWMTHYLS (241 aa)) is the Peptidase S1 domain. A disulfide bond links Cys-95 and Cys-111. Residues His-110 and Asp-159 each act as charge relay system in the active site. 3 disulfide bridges follow: Cys-194–Cys-262, Cys-225–Cys-241, and Cys-252–Cys-282. Asn-207, Asn-237, and Asn-246 each carry an N-linked (GlcNAc...) asparagine glycan. The Charge relay system role is filled by Ser-256. A helical transmembrane segment spans residues 313–333 (LFNMDIVLGQVLTALGSVILL). Residues 334–336 (GVT) lie on the Cytoplasmic side of the membrane.

The protein belongs to the peptidase S1 family. Exclusively expressed in the testis, from spermatocytes to elongated spermatids (at protein level).

The protein resides in the cell membrane. It localises to the cytoplasmic vesicle. Its subcellular location is the secretory vesicle. It is found in the acrosome. Functionally, required for male fertility. Plays a critical role in sperm capacitation and acrosome reactions during fertilization, and also plays a role in the regulation of proteins involved in spermatogenesis. Regulates protein pathways that promote chromosomal synapsis formation, double-strand break repair, formation of the inner mitochondrial membrane cristae and apoptosis in developing sperm. Required for normal sperm motility and binding to the zona pellucida, potentially via a role in ADAM3 protein maturation. The chain is Transmembrane protease serine 12 from Mus musculus (Mouse).